Reading from the N-terminus, the 262-residue chain is MNKPLLSELIIDIGNTSIAFALFKDNQVNLFIKMKTNLMLRYDEVYSFFEENFDFNVNKVFISSVVPILNETFKNVIFSFFKIKPLFIGFDLNYDLTFNPYKSDKFLLGSDVFANLVAAIENYSFENVLVVDLGTACTIFAVSRQDGILGGIINSGPLINFNSLLDNAYLIKKFPISTPNNLLERTTSGSVNSGLFYQYKYLIEGVYRDIKQMYKKKFNLIITGGNADLILSLIEIEFIFNIHLTVEGVRILGNSIDFKFVN.

ATP is bound at residue 12-19 (DIGNTSIA). Substrate-binding positions include Tyr-94 and 109–112 (GSDV). Asp-111 serves as the catalytic Proton acceptor. Asp-132 lines the K(+) pocket. Thr-135 lines the ATP pocket. Thr-187 is a substrate binding site.

Belongs to the type III pantothenate kinase family. Homodimer. NH4(+) serves as cofactor. The cofactor is K(+).

It is found in the cytoplasm. It carries out the reaction (R)-pantothenate + ATP = (R)-4'-phosphopantothenate + ADP + H(+). Its pathway is cofactor biosynthesis; coenzyme A biosynthesis; CoA from (R)-pantothenate: step 1/5. Functionally, catalyzes the phosphorylation of pantothenate (Pan), the first step in CoA biosynthesis. In Borreliella burgdorferi (strain ATCC 35210 / DSM 4680 / CIP 102532 / B31) (Borrelia burgdorferi), this protein is Type III pantothenate kinase.